We begin with the raw amino-acid sequence, 106 residues long: U1-lycotoxin-Ls1z (106 aa).

An N-terminal signal peptide occupies residues 1-19; it reads MKVLVVVALLVTLISYSSS. The propeptide occupies 20–40; that stretch reads EGIDDLEADELLSLMANEQTR. 4 disulfide bridges follow: Cys43–Cys58, Cys50–Cys67, Cys57–Cys85, and Cys69–Cys83.

This sequence belongs to the neurotoxin 19 (CSTX) family. 03 subfamily. In terms of tissue distribution, expressed by the venom gland.

The protein localises to the secreted. The sequence is that of U1-lycotoxin-Ls1z from Lycosa singoriensis (Wolf spider).